A 374-amino-acid chain; its full sequence is Putative cullin-like protein 2 (374 aa).

This sequence belongs to the cullin family.

This Arabidopsis thaliana (Mouse-ear cress) protein is Putative cullin-like protein 2.